The chain runs to 518 residues: Transcription factor TT8 (518 aa).

2 coiled-coil regions span residues 220–240 and 405–428; these read EVHE…MSEE and VNHL…KRTR. The region spanning 359 to 408 is the bHLH domain; sequence REDLSHVVAERRRREKLNEKFITLRSMVPFVTKMDKVSILGDTIAYVNHL.

This sequence belongs to the bHLH protein family. Homodimer. Interacts with MYB4, MYB5, MYB6, MYB82, MYB113, MYB114, MYB75/PAP1, MYB90/PAP2, and TT2. As to expression, buds, flowers and developing siliques, but not in leaves, stems and roots.

The protein resides in the nucleus. In terms of biological role, transcription activator, when associated with MYB75/PAP1 or MYB90/PAP2. Involved in the control of flavonoid pigmentation. Plays a key role in regulating leucoanthocyanidin reductase (BANYULS) and dihydroflavonol-4-reductase (DFR). Not required for leucoanthocyanidin dioxygenase (LDOX) expression. This Arabidopsis thaliana (Mouse-ear cress) protein is Transcription factor TT8.